The primary structure comprises 513 residues: ATP synthase subunit alpha 1 (513 aa).

An ATP-binding site is contributed by 169-176 (GDRQTGKT).

The protein belongs to the ATPase alpha/beta chains family. In terms of assembly, F-type ATPases have 2 components, CF(1) - the catalytic core - and CF(0) - the membrane proton channel. CF(1) has five subunits: alpha(3), beta(3), gamma(1), delta(1), epsilon(1). CF(0) has three main subunits: a(1), b(2) and c(9-12). The alpha and beta chains form an alternating ring which encloses part of the gamma chain. CF(1) is attached to CF(0) by a central stalk formed by the gamma and epsilon chains, while a peripheral stalk is formed by the delta and b chains.

The protein localises to the cell inner membrane. The enzyme catalyses ATP + H2O + 4 H(+)(in) = ADP + phosphate + 5 H(+)(out). Produces ATP from ADP in the presence of a proton gradient across the membrane. The alpha chain is a regulatory subunit. This chain is ATP synthase subunit alpha 1, found in Photobacterium profundum (strain SS9).